The chain runs to 431 residues: Fibrinogen C domain-containing protein 1 (431 aa).

The Cytoplasmic segment spans residues 1–3 (MLC). A helical; Signal-anchor for type II membrane protein membrane pass occupies residues 4-24 (TVLLALAVLLAVAVTGAVLFL). The Extracellular portion of the chain corresponds to 25–431 (NHTHTPGTAP…MKIRPVREDR (407 aa)). The region spanning 205-428 (CATGSRPRDC…FSEMKIRPVR (224 aa)) is the Fibrinogen C-terminal domain. A disulfide bridge links Cys-214 with Cys-243. N-linked (GlcNAc...) asparagine glycosylation occurs at Asn-310. Residues Asp-363 and Asp-365 each contribute to the Ca(2+) site. Cysteines 371 and 384 form a disulfide.

Homotetramer; disulfide-linked.

The protein localises to the membrane. In terms of biological role, acetyl group-binding receptor which shows a high-affinity and calcium-dependent binding to acetylated structures such as chitin, some N-acetylated carbohydrates, and amino acids, but not to their non-acetylated counterparts. Can facilitate the endocytosis of acetylated components. This is Fibrinogen C domain-containing protein 1 (FIBCD1) from Macaca fascicularis (Crab-eating macaque).